The chain runs to 102 residues: Phosphoribosyl-ATP pyrophosphatase (102 aa).

The protein belongs to the PRA-PH family.

It is found in the cytoplasm. It catalyses the reaction 1-(5-phospho-beta-D-ribosyl)-ATP + H2O = 1-(5-phospho-beta-D-ribosyl)-5'-AMP + diphosphate + H(+). It participates in amino-acid biosynthesis; L-histidine biosynthesis; L-histidine from 5-phospho-alpha-D-ribose 1-diphosphate: step 2/9. The polypeptide is Phosphoribosyl-ATP pyrophosphatase (Jannaschia sp. (strain CCS1)).